The chain runs to 301 residues: Methionine aminopeptidase (301 aa).

His65 contributes to the substrate binding site. Residues Asp85, Asp96, and His156 each contribute to the a divalent metal cation site. Substrate is bound at residue His164. Residues Glu189 and Glu284 each coordinate a divalent metal cation.

It belongs to the peptidase M24A family. Methionine aminopeptidase archaeal type 2 subfamily. Monomer. Co(2+) is required as a cofactor. The cofactor is Zn(2+). Requires Mn(2+) as cofactor. It depends on Fe(2+) as a cofactor.

The enzyme catalyses Release of N-terminal amino acids, preferentially methionine, from peptides and arylamides.. Functionally, removes the N-terminal methionine from nascent proteins. The N-terminal methionine is often cleaved when the second residue in the primary sequence is small and uncharged (Met-Ala-, Cys, Gly, Pro, Ser, Thr, or Val). The chain is Methionine aminopeptidase from Saccharolobus solfataricus (strain ATCC 35092 / DSM 1617 / JCM 11322 / P2) (Sulfolobus solfataricus).